The chain runs to 239 residues: 4-hydroxy-tetrahydrodipicolinate reductase (239 aa).

NAD(+) contacts are provided by residues 9–14 (GINGKI), 78–80 (GTT), and 104–107 (APNF). Catalysis depends on H134, which acts as the Proton donor/acceptor. H135 is a binding site for (S)-2,3,4,5-tetrahydrodipicolinate. K138 acts as the Proton donor in catalysis. 144-145 (GT) provides a ligand contact to (S)-2,3,4,5-tetrahydrodipicolinate.

The protein belongs to the DapB family.

Its subcellular location is the cytoplasm. It catalyses the reaction (S)-2,3,4,5-tetrahydrodipicolinate + NAD(+) + H2O = (2S,4S)-4-hydroxy-2,3,4,5-tetrahydrodipicolinate + NADH + H(+). The catalysed reaction is (S)-2,3,4,5-tetrahydrodipicolinate + NADP(+) + H2O = (2S,4S)-4-hydroxy-2,3,4,5-tetrahydrodipicolinate + NADPH + H(+). Its pathway is amino-acid biosynthesis; L-lysine biosynthesis via DAP pathway; (S)-tetrahydrodipicolinate from L-aspartate: step 4/4. Catalyzes the conversion of 4-hydroxy-tetrahydrodipicolinate (HTPA) to tetrahydrodipicolinate. In Coxiella burnetii (strain CbuG_Q212) (Coxiella burnetii (strain Q212)), this protein is 4-hydroxy-tetrahydrodipicolinate reductase.